We begin with the raw amino-acid sequence, 215 residues long: Ribonuclease S-6 (215 aa).

A signal peptide spans 1 to 22; the sequence is MFNLPLTSVFVIFLFALSPIYG. Glutamine 32 is an RNA binding site. Cysteine 38 and cysteine 43 are disulfide-bonded. Residue asparagine 49 is glycosylated (N-linked (GlcNAc...) asparagine). An RNA-binding site is contributed by histidine 53. Histidine 53 serves as the catalytic Proton donor. N-linked (GlcNAc...) asparagine glycosylation is present at asparagine 59. Cysteine 67 and cysteine 116 are oxidised to a cystine. RNA is bound by residues 91–92, arginine 94, phenylalanine 105, 108–109, and 112–113; these read DL, RE, and KH. Residue glutamate 109 is part of the active site. The active-site Proton acceptor is the histidine 113. 2 N-linked (GlcNAc...) asparagine glycosylation sites follow: asparagine 160 and asparagine 172. Disulfide bonds link cysteine 175–cysteine 204 and cysteine 187–cysteine 198.

This sequence belongs to the RNase T2 family.

Its subcellular location is the secreted. The protein localises to the extracellular space. The enzyme catalyses a ribonucleotidyl-ribonucleotide-RNA + H2O = a 3'-end 3'-phospho-ribonucleotide-RNA + a 5'-end dephospho-ribonucleoside-RNA + H(+). Functionally, self-incompatibility (SI) is the inherited ability of a flowering plant to prevent self-fertilization by discriminating between self and non-self pollen during pollination. In many species of the Solanaceae, self-incompatibility is controlled by the single, multiallelic locus S. This stylar glycoprotein is associated with expression of self-incompatibility in potato. The chain is Ribonuclease S-6 from Nicotiana alata (Winged tobacco).